Consider the following 268-residue polypeptide: Small ribosomal subunit protein eS1 (268 aa).

The segment at 1 to 21 is disordered; the sequence is MAVGKNKGLSKGGKKGGKKKV.

The protein belongs to the eukaryotic ribosomal protein eS1 family. In terms of assembly, component of the small ribosomal subunit. Mature ribosomes consist of a small (40S) and a large (60S) subunit. The 40S subunit contains about 33 different proteins and 1 molecule of RNA (18S). The 60S subunit contains about 49 different proteins and 3 molecules of RNA (28S, 5.8S and 5S).

The protein localises to the cytoplasm. Functionally, essential for oogenesis; required for late follicle cell development. The chain is Small ribosomal subunit protein eS1 from Drosophila virilis (Fruit fly).